Consider the following 55-residue polypeptide: Neurotoxin BmP08 (55 aa).

A signal peptide spans 1 to 23 (MKIFFAVLVILVLFSMLIWTAYG). Cystine bridges form between C30-C45, C36-C50, and C39-C53.

As to expression, expressed by the venom gland.

It is found in the secreted. The chain is Neurotoxin BmP08 from Olivierus martensii (Manchurian scorpion).